A 258-amino-acid chain; its full sequence is Imidazole glycerol phosphate synthase subunit HisF (258 aa).

Active-site residues include aspartate 11 and aspartate 130.

It belongs to the HisA/HisF family. Heterodimer of HisH and HisF.

The protein resides in the cytoplasm. It carries out the reaction 5-[(5-phospho-1-deoxy-D-ribulos-1-ylimino)methylamino]-1-(5-phospho-beta-D-ribosyl)imidazole-4-carboxamide + L-glutamine = D-erythro-1-(imidazol-4-yl)glycerol 3-phosphate + 5-amino-1-(5-phospho-beta-D-ribosyl)imidazole-4-carboxamide + L-glutamate + H(+). Its pathway is amino-acid biosynthesis; L-histidine biosynthesis; L-histidine from 5-phospho-alpha-D-ribose 1-diphosphate: step 5/9. IGPS catalyzes the conversion of PRFAR and glutamine to IGP, AICAR and glutamate. The HisF subunit catalyzes the cyclization activity that produces IGP and AICAR from PRFAR using the ammonia provided by the HisH subunit. In Escherichia coli O127:H6 (strain E2348/69 / EPEC), this protein is Imidazole glycerol phosphate synthase subunit HisF.